The sequence spans 156 residues: Ribonuclease H (156 aa).

The RNase H type-1 domain maps to 1–142 (MNKQVEIFTD…CDELARQAAE (142 aa)). 4 residues coordinate Mg(2+): Asp-10, Glu-48, Asp-70, and Asp-134. Positions 135–156 (ELARQAAENPTEDDIGYQPEPQ) are disordered.

It belongs to the RNase H family. In terms of assembly, monomer. It depends on Mg(2+) as a cofactor.

It localises to the cytoplasm. It catalyses the reaction Endonucleolytic cleavage to 5'-phosphomonoester.. Functionally, endonuclease that specifically degrades the RNA of RNA-DNA hybrids. The protein is Ribonuclease H of Vibrio cholerae serotype O1 (strain M66-2).